The sequence spans 451 residues: Probable plasmid replicative DNA helicase (451 aa).

The SF4 helicase domain occupies 194–451; it reads NDSFYDGLPT…SKFSAIKKVW (258 aa). 225-232 is a binding site for ATP; that stretch reads ARPSIGKT.

It belongs to the helicase family. DnaB subfamily. In terms of assembly, homohexamer.

It catalyses the reaction Couples ATP hydrolysis with the unwinding of duplex DNA at the replication fork by translocating in the 5'-3' direction. This creates two antiparallel DNA single strands (ssDNA). The leading ssDNA polymer is the template for DNA polymerase III holoenzyme which synthesizes a continuous strand.. It carries out the reaction ATP + H2O = ADP + phosphate + H(+). Functionally, a replicative DNA helicase, it participates in initiation and elongation during DNA replication. Travels ahead of the DNA replisome, separating dsDNA into templates for DNA synthesis. A processive ATP-dependent 5'-3' DNA helicase it has DNA-dependent ATPase activity. The chain is Probable plasmid replicative DNA helicase from Chlamydia muridarum (strain MoPn / Nigg).